The following is a 379-amino-acid chain: Cytochrome b (379 aa).

A run of 4 helical transmembrane segments spans residues 34-54 (FGSL…LLAM), 78-99 (WLIR…YFHI), 114-134 (WNTG…GYVL), and 179-199 (FFAL…IHLT). H84 and H98 together coordinate heme b. The heme b site is built by H183 and H197. Position 202 (H202) interacts with a ubiquinone. Helical transmembrane passes span 227 to 247 (LKDI…TFFS), 289 to 309 (LGGV…PLLH), 321 to 341 (FSQV…WVGS), and 348 to 368 (FIAI…VLFP).

Belongs to the cytochrome b family. As to quaternary structure, the cytochrome bc1 complex contains 11 subunits: 3 respiratory subunits (MT-CYB, CYC1 and UQCRFS1), 2 core proteins (UQCRC1 and UQCRC2) and 6 low-molecular weight proteins (UQCRH/QCR6, UQCRB/QCR7, UQCRQ/QCR8, UQCR10/QCR9, UQCR11/QCR10 and a cleavage product of UQCRFS1). This cytochrome bc1 complex then forms a dimer. Requires heme b as cofactor.

Its subcellular location is the mitochondrion inner membrane. Component of the ubiquinol-cytochrome c reductase complex (complex III or cytochrome b-c1 complex) that is part of the mitochondrial respiratory chain. The b-c1 complex mediates electron transfer from ubiquinol to cytochrome c. Contributes to the generation of a proton gradient across the mitochondrial membrane that is then used for ATP synthesis. This Apteryx australis (Southern brown kiwi) protein is Cytochrome b (MT-CYB).